The sequence spans 484 residues: Glycogen synthase 2 (484 aa).

Residue Arg15 participates in ADP-alpha-D-glucose binding.

The protein belongs to the glycosyltransferase 1 family. Bacterial/plant glycogen synthase subfamily.

It catalyses the reaction [(1-&gt;4)-alpha-D-glucosyl](n) + ADP-alpha-D-glucose = [(1-&gt;4)-alpha-D-glucosyl](n+1) + ADP + H(+). The protein operates within glycan biosynthesis; glycogen biosynthesis. In terms of biological role, synthesizes alpha-1,4-glucan chains using ADP-glucose. The chain is Glycogen synthase 2 from Geobacter sulfurreducens (strain ATCC 51573 / DSM 12127 / PCA).